The primary structure comprises 274 residues: uncharacterized protein (274 aa).

It belongs to the type II cytokine receptor family.

This is an uncharacterized protein from Sus scrofa (Pig).